The following is a 396-amino-acid chain: MGIKHCCYILYFTLALVTLLQPVRSAEDLQEILPVNETRRLTTSGAYNIIDGCWRGKADWAENRKALADCAQGFGKGTVGGKDGDIYTVTSELDDDVANPKEGTLRFGAAQNRPLWIIFERDMVIRLDKEMVVNSDKTIDGRGAKVEIINAGFTLNGVKNVIIHNINMHDVKVNPGGLIKSNDGPAAPRAGSDGDAISISGSSQIWIDHCSLSKSVDGLVDAKLGTTRLTVSNSLFTQHQFVLLFGAGDENIEDRGMLATVAFNTFTDNVDQRMPRCRHGFFQVVNNNYDKWGSYAIGGSASPTILSQGNRFCAPDERSKKNVLGRHGEAAAESMKWNWRTNKDVLENGAIFVASGVDPVLTPEQSAGMIPAEPGESALSLTSSAGVLSCQPGAPC.

A signal peptide spans 1–25 (MGIKHCCYILYFTLALVTLLQPVRS). N-linked (GlcNAc...) asparagine glycosylation occurs at Asn-36. A disulfide bridge connects residues Cys-53 and Cys-70. The Ca(2+) site is built by Asp-193, Asp-217, and Asp-221. Arg-273 is an active-site residue.

Belongs to the polysaccharide lyase 1 family. Amb a subfamily. In terms of assembly, monomer. Ca(2+) is required as a cofactor. Post-translationally, the N-terminus is blocked. In terms of tissue distribution, pollen and flowers.

It carries out the reaction Eliminative cleavage of (1-&gt;4)-alpha-D-galacturonan to give oligosaccharides with 4-deoxy-alpha-D-galact-4-enuronosyl groups at their non-reducing ends.. It participates in glycan metabolism; pectin degradation; 2-dehydro-3-deoxy-D-gluconate from pectin: step 2/5. In terms of biological role, has pectate lyase activity. The protein is Pectate lyase 5 of Ambrosia artemisiifolia (Common ragweed).